Consider the following 148-residue polypeptide: Large ribosomal subunit protein bL9 (148 aa).

It belongs to the bacterial ribosomal protein bL9 family.

Binds to the 23S rRNA. The chain is Large ribosomal subunit protein bL9 from Aliarcobacter butzleri (strain RM4018) (Arcobacter butzleri).